The chain runs to 241 residues: Cobalt transport protein CbiM (241 aa).

Positions Met-1–Ala-24 are cleaved as a signal peptide. Helical transmembrane passes span Gly-30–Gly-50, Leu-67–Val-87, Leu-99–Phe-119, Thr-131–Phe-151, Ser-160–Leu-180, and Gly-202–Val-222.

It belongs to the CbiM family. As to quaternary structure, forms an energy-coupling factor (ECF) transporter complex composed of an ATP-binding protein (A component, CbiO), a transmembrane protein (T component, CbiQ) and 2 possible substrate-capture proteins (S components, CbiM and CbiN) of unknown stoichimetry.

It localises to the cell membrane. Its pathway is cofactor biosynthesis; adenosylcobalamin biosynthesis. In terms of biological role, part of the energy-coupling factor (ECF) transporter complex CbiMNOQ involved in cobalt import. This is Cobalt transport protein CbiM from Acetoanaerobium sticklandii (strain ATCC 12662 / DSM 519 / JCM 1433 / CCUG 9281 / NCIMB 10654 / HF) (Clostridium sticklandii).